The sequence spans 388 residues: Na(+)/H(+) antiporter NhaA (388 aa).

The Cytoplasmic segment spans residues 1-11 (MKHLHRFFSSD). A helical transmembrane segment spans residues 12–31 (ASGGIILIIAAILAMIMANS). Over 32–58 (GATSGWYHDFLETPVQLRVGSLEINKN) the chain is Periplasmic. The helical transmembrane segment at 59-80 (MLLWINDALMAVFFLLVGLEVK) threads the bilayer. Over 81–96 (RELMQGSLASLRQAAF) the chain is Cytoplasmic. A helical membrane pass occupies residues 97–116 (PVIAAIGGMIVPALLYLAFN). Topologically, residues 117 to 122 (YADPIT) are periplasmic. The chain crosses the membrane as a helical span at residues 123-130 (REGWAIPA). Residues 131 to 154 (ATDIAFALGVLALLGSRVPLALKI) are Cytoplasmic-facing. Residues 155–176 (FLMALAIIDDLGAIIIIALFYT) form a helical membrane-spanning segment. At 177 to 180 (NDLS) the chain is on the periplasmic side. Residues 181 to 200 (MASLGVAAVAIAVLAVLNLC) form a helical membrane-spanning segment. Residues 201-204 (GVRR) lie on the Cytoplasmic side of the membrane. The helical transmembrane segment at 205–222 (TGVYILVGVVLWTAVLKS) threads the bilayer. A topological domain (periplasmic) is located at residue glycine 223. The chain crosses the membrane as a helical span at residues 224–236 (VHATLAGVIVGFF). Residues 237–253 (IPLKEKHGRSPAKRLEH) lie on the Cytoplasmic side of the membrane. Residues 254-272 (VLHPWVAYLILPLFAFANA) traverse the membrane as a helical segment. Over 273–286 (GVSLQGVTLDGLTS) the chain is Periplasmic. Residues 287 to 310 (ILPLGIIAGLLIGKPLGISLFCWL) traverse the membrane as a helical segment. Over 311 to 339 (ALRLKLAHLPEGTTYQQIMAVGILCGIGF) the chain is Cytoplasmic. Residues 340-350 (TMSIFIASLAF) form a helical membrane-spanning segment. The Periplasmic segment spans residues 351–357 (GSVDPEL). A helical membrane pass occupies residues 358–380 (INWAKLGILVGSISSAVIGYSWL). The Cytoplasmic portion of the chain corresponds to 381 to 388 (RVRLRPSV).

It belongs to the NhaA Na(+)/H(+) (TC 2.A.33) antiporter family.

It is found in the cell inner membrane. It carries out the reaction Na(+)(in) + 2 H(+)(out) = Na(+)(out) + 2 H(+)(in). Its function is as follows. Na(+)/H(+) antiporter that extrudes sodium in exchange for external protons. This is Na(+)/H(+) antiporter NhaA from Escherichia coli O9:H4 (strain HS).